The following is a 37-amino-acid chain: Mastoparan-VT (37 aa).

The propeptide occupies 1-22 (EALADPIADPVAGPNPEADPEA). AXPX repeat units lie at residues 4 to 7 (ADPI), 8 to 11 (ADPV), 12 to 15 (AGPN), and 18 to 21 (ADPE). L36 carries the leucine amide modification.

The protein belongs to the MCD family. Mastoparan subfamily. In terms of tissue distribution, expressed by the venom gland.

It is found in the secreted. The protein resides in the target cell membrane. Antimicrobial peptide with potent activity against both Gram-positive (S.aureus MIC=50 ug/ml, and B.subtilis MIC=25 ug/ml) and Gram-negative bacteria (P.aeruginosa MIC=25 ug/ml, E.coli MIC=3-50 ug/ml, K.pneumoniae MIC=25 ug/ml). Exhibits little hemolytic activity on human erythrocytes. In Vespa tropica (Greater banded hornet), this protein is Mastoparan-VT.